Here is a 188-residue protein sequence, read N- to C-terminus: MQVPAVLGEPIRFVLNWGRRYSLWVFNFGLACCAIEFIATSMSRHDFMRLGVIPFAHGPRQADLMVVSGTVTDKMAPAIKRLYDQMPEPKYVISFGACSNCGGPYWDSYSVTKGVDQLIPVDVYVPGCPPRPEALLHGILRLQEKIAAEEAGVGGVSRPDALASPADALPPRAADSLTAPPVRPPDPS.

The [4Fe-4S] cluster site is built by Cys-32, Cys-33, Cys-98, and Cys-128. The interval 153–188 (VGGVSRPDALASPADALPPRAADSLTAPPVRPPDPS) is disordered. Residues 157 to 177 (SRPDALASPADALPPRAADSL) are compositionally biased toward low complexity.

Belongs to the complex I 20 kDa subunit family. In terms of assembly, NDH-1 is composed of 14 different subunits. Subunits NuoB, C, D, E, F, and G constitute the peripheral sector of the complex. Requires [4Fe-4S] cluster as cofactor.

It localises to the cell membrane. The enzyme catalyses a quinone + NADH + 5 H(+)(in) = a quinol + NAD(+) + 4 H(+)(out). Functionally, NDH-1 shuttles electrons from NADH, via FMN and iron-sulfur (Fe-S) centers, to quinones in the respiratory chain. The immediate electron acceptor for the enzyme in this species is believed to be a menaquinone. Couples the redox reaction to proton translocation (for every two electrons transferred, four hydrogen ions are translocated across the cytoplasmic membrane), and thus conserves the redox energy in a proton gradient. The chain is NADH-quinone oxidoreductase subunit B 1 (nuoB1) from Salinispora tropica (strain ATCC BAA-916 / DSM 44818 / JCM 13857 / NBRC 105044 / CNB-440).